Reading from the N-terminus, the 90-residue chain is MAKEELLELDGIVDEVLPDSRYRVTLDNGVVVGAYASGRMRKNHIRILAGDRVTLELSVYDLTKGRINFRHKDERATGGGGARNSQFRRR.

Positions 1 to 72 (MAKEELLELD…TKGRINFRHK (72 aa)) constitute an S1-like domain.

The protein belongs to the IF-1 family. Component of the 30S ribosomal translation pre-initiation complex which assembles on the 30S ribosome in the order IF-2 and IF-3, IF-1 and N-formylmethionyl-tRNA(fMet); mRNA recruitment can occur at any time during PIC assembly.

The protein localises to the cytoplasm. One of the essential components for the initiation of protein synthesis. Stabilizes the binding of IF-2 and IF-3 on the 30S subunit to which N-formylmethionyl-tRNA(fMet) subsequently binds. Helps modulate mRNA selection, yielding the 30S pre-initiation complex (PIC). Upon addition of the 50S ribosomal subunit IF-1, IF-2 and IF-3 are released leaving the mature 70S translation initiation complex. In Paraburkholderia xenovorans (strain LB400), this protein is Translation initiation factor IF-1 2.